The primary structure comprises 119 residues: NADH-quinone oxidoreductase subunit A (119 aa).

3 helical membrane passes run 9–29, 63–83, and 88–108; these read VLLFILVGIAVGVVPLVLGYV, LVAILFILFDLEIAFLFPWAV, and VGMAGFVAVLIFLTILVVGFA.

This sequence belongs to the complex I subunit 3 family. As to quaternary structure, NDH-1 is composed of 14 different subunits. Subunits NuoA, H, J, K, L, M, N constitute the membrane sector of the complex.

It is found in the cell inner membrane. The catalysed reaction is a quinone + NADH + 5 H(+)(in) = a quinol + NAD(+) + 4 H(+)(out). NDH-1 shuttles electrons from NADH, via FMN and iron-sulfur (Fe-S) centers, to quinones in the respiratory chain. The immediate electron acceptor for the enzyme in this species is believed to be ubiquinone. Couples the redox reaction to proton translocation (for every two electrons transferred, four hydrogen ions are translocated across the cytoplasmic membrane), and thus conserves the redox energy in a proton gradient. This is NADH-quinone oxidoreductase subunit A from Verminephrobacter eiseniae (strain EF01-2).